Consider the following 224-residue polypeptide: Ion-translocating oxidoreductase complex subunit E (224 aa).

5 helical membrane passes run 51 to 71, 81 to 101, 105 to 125, 140 to 160, and 194 to 214; these read LGLG…VSLF, IPIY…LMNA, SLYQ…IVIG, MFDG…LGAI, and HFLL…ILAI.

This sequence belongs to the NqrDE/RnfAE family. As to quaternary structure, the complex is composed of six subunits: RnfA, RnfB, RnfC, RnfD, RnfE and RnfG.

It localises to the cell inner membrane. Part of a membrane-bound complex that couples electron transfer with translocation of ions across the membrane. This chain is Ion-translocating oxidoreductase complex subunit E, found in Pasteurella multocida (strain Pm70).